We begin with the raw amino-acid sequence, 156 residues long: Transcriptional repressor NrdR (156 aa).

Residues 3 to 34 fold into a zinc finger; sequence CPYCGETEDKVIDSRQGKEADVIRRRRECLSC. The ATP-cone domain occupies 49-139; sequence LVIIKKDGRR…VYREFKHVND (91 aa).

The protein belongs to the NrdR family. It depends on Zn(2+) as a cofactor.

In terms of biological role, negatively regulates transcription of bacterial ribonucleotide reductase nrd genes and operons by binding to NrdR-boxes. This chain is Transcriptional repressor NrdR, found in Desulfatibacillum aliphaticivorans.